The chain runs to 65 residues: Large ribosomal subunit protein uL29 (65 aa).

It belongs to the universal ribosomal protein uL29 family.

This is Large ribosomal subunit protein uL29 from Dehalococcoides mccartyi (strain ATCC BAA-2100 / JCM 16839 / KCTC 5957 / BAV1).